The chain runs to 1513 residues: Exo-beta-1,6-galactobiohydrolase (1513 aa).

The signal sequence occupies residues 1-31 (MRVLSKSLAAMVAAATLVGGGAFAVAGTAYA). Residues 666–801 (VADTTSGDSA…PSANQTWTLR (136 aa)) enclose the Ricin B-type lectin domain. 2 consecutive F5/8 type C domains span residues 965–1112 (AIYV…AFVT) and 1116–1273 (GAAK…VFAQ). Residues 1456-1480 (VAPGPEEQKPGNTNKPGATGNGNKN) are disordered. A compositionally biased stretch (polar residues) spans 1465–1480 (PGNTNKPGATGNGNKN). The chain crosses the membrane as a helical span at residues 1489-1509 (VAAIAGAVALLAAAAGALFML).

It belongs to the glycosyl hydrolase 30 family.

It localises to the cell membrane. It carries out the reaction Hydrolysis of (1-&gt;6)-beta-D-galactosidic linkages in arabinogalactan proteins and (1-&gt;3):(1-&gt;6)-beta-galactans to yield (1-&gt;6)-beta-galactobiose as the final product.. Its function is as follows. Involved in the type II arabinogalactan (AG) side chains degradation. Specifically releases the non-reducing terminal beta-1,6-galactobiose (beta-1,6-Gal2) from both dearabinosylated larch AG and polymeric beta-1,6-galactan chains by an exo-mode of action. Shows lower activity with larch AG, and very weak activity with dearabinosylated gum arabic, gum arabic and potato galactan. Can probably release beta-1,6-Gal2 from the internal side chains of type II AG. The protein is Exo-beta-1,6-galactobiohydrolase of Bifidobacterium longum subsp. longum (strain ATCC 15707 / DSM 20219 / JCM 1217 / NCTC 11818 / E194b).